Here is a 72-residue protein sequence, read N- to C-terminus: Translation initiation factor IF-1 (72 aa).

The region spanning 1-72 (MARDDVIEVD…DKGRITFRYK (72 aa)) is the S1-like domain.

The protein belongs to the IF-1 family. In terms of assembly, component of the 30S ribosomal translation pre-initiation complex which assembles on the 30S ribosome in the order IF-2 and IF-3, IF-1 and N-formylmethionyl-tRNA(fMet); mRNA recruitment can occur at any time during PIC assembly.

It is found in the cytoplasm. Functionally, one of the essential components for the initiation of protein synthesis. Stabilizes the binding of IF-2 and IF-3 on the 30S subunit to which N-formylmethionyl-tRNA(fMet) subsequently binds. Helps modulate mRNA selection, yielding the 30S pre-initiation complex (PIC). Upon addition of the 50S ribosomal subunit IF-1, IF-2 and IF-3 are released leaving the mature 70S translation initiation complex. This chain is Translation initiation factor IF-1, found in Helicobacter pylori (strain HPAG1).